We begin with the raw amino-acid sequence, 902 residues long: MSQSKEDKIRSILEAKNIKSNFQNKENLSEFNEKKASKRAEDLLDVYYNTLSTADMEFPYWYNREYRKSDGDIPVVRRAKALKAAFSHMTPNIIPGEKIVMQKTRHYRGSFPMPWVSESFFVAQGEQMREEAKKLASNTADELTKFGSGGGNVTESFGNVVSIAGKFGMRKEEVPVLVKMAKEWVGKSVEDLGFHYEKMMPDYDLKENLMSTLICMFDSGYTLPQGREVINYFYPLNYGLDGIIEMAKECKKAVAGNASGDGLIGMDRLYFYEAVIQVIEGLQTWILNYAKHAKYLESIETDLEAKKEYSDLVEILEHIAHKQPRTFREALQLTYTIHIASVNEDAISGMSIGRFGQILYPWYEQDIEKGLITKEEVIELLELYRIKITCIDCFASAGVNGGVLSGNTFNTLSIGGLKEDGSTGANELEELLLEASMRCRTPQPSLTMLYDEKLPEDFLMKAAECTKLGSGYPAWVNNSNGTTFMMKQFADEGMTVEEARAFALGGCLETSPGCWKQLTLNGKTYSIAGGAGQSAGSGVHFIANPKILELVLMNGKDYRMNIQVFEPHNKPLDTYEEVIEVFKDYYKQAINVLERANNIELDIWRKFDTSIINSLLKPDCLDKGQHIGNMGYRYNATLNVETCGTVTMVNSFAALKKLVYDDKAFTIEEMKDAILNNFGFKDALEVGNYSMADQVKVDKTGKYDAIYKACLDAPKYGNNDLYADNILKNYEVWLSKVCEEAQSLYAKKMYPCQISVSTHGPQGAATLATPDGRLSGTTYSDGSVSAYAGTDKNGVYALFESATIWDQAVVQNSQMNLKLHPTTIKGQQGTKKLLDLTRSYLRKGGFHIQYNVVDSETLKDAQKNPDNYRQLMVRVAGFTQYWCELGKPIQDEVIARTEYEGV.

Residues 38 to 774 enclose the PFL domain; it reads KRAEDLLDVY…ATLATPDGRL (737 aa). 4-hydroxyphenylacetate is bound by residues S348 and C507. Catalysis depends on C507, which acts as the Cysteine radical intermediate. The Proton donor role is filled by E509. H540 and E641 together coordinate 4-hydroxyphenylacetate. One can recognise a Glycine radical domain in the interval 782 to 902; it reads GSVSAYAGTD…VIARTEYEGV (121 aa). Glycine radical is present on G877.

The protein belongs to the glycyl radical enzyme (GRE) family. HPAD subfamily. In terms of assembly, heterooctamer consisting of 4 large (HpdB) subunits and 4 small (HpdC) subunits, arranged as a tetramer of heterodimers. Also forms a catalytically inactive homodimer. In terms of processing, requires the activating protein CsdA to generate the key active site glycyl radical that is involved in catalysis. Post-translationally, phosphorylated on serine. Phosphorylation may trigger the formation of the active heterooctamers and thereby regulates enzyme activity.

It carries out the reaction 4-hydroxyphenylacetate + H(+) = 4-methylphenol + CO2. The catalysed reaction is 3,4-dihydroxyphenylacetate + H(+) = 4-methylcatechol + CO2. Glycyl radical subunit of the HPA decarboxylase that decarboxylates phenylacetates with a hydroxyl group in the p-position. Active toward 4-hydroxyphenylacetate and 3,4-dihydroxyphenylacetate, forming 4-methylphenol and 4-methylcatechol, respectively. Is likely involved in the catabolism of aromatic amino acids such as tyrosine fermentation. 4-methylphenol (p-cresol) formation provides metabolic toxicity, which allows an active suppression of other microbes and may provide growth advantages for the producers in highly competitive environments. The large subunit is the catalytic subunit that binds the substrate. This chain is 4-hydroxyphenylacetate decarboxylase glycyl radical subunit, found in Clostridioides difficile (strain 630) (Peptoclostridium difficile).